Reading from the N-terminus, the 1352-residue chain is Ubiquitin carboxyl-terminal hydrolase 31 (1352 aa).

Positions 1-16 are enriched in low complexity; sequence MSKVTAPGSGPPAAAS. Disordered regions lie at residues 1–62 and 79–119; these read MSKV…RSVG and SSEG…PPAC. Over residues 32-43 the composition is skewed to gly residues; it reads RAGGGGAGGPGA. The span at 44–62 shows a compositional bias: low complexity; it reads SGPAAPSSPSSPSSARSVG. The span at 95–117 shows a compositional bias: pro residues; sequence PPGPAAAPTPPPCPPPPASPAPP. Residues 128 to 765 enclose the USP domain; it reads AGLRNHGNTC…TAYILFYQRR (638 aa). Cys137 acts as the Nucleophile in catalysis. The tract at residues 162–185 is disordered; sequence RAGRPEPSPDPEQPAGRGAQGQGE. Residue His723 is the Proton acceptor of the active site. Disordered regions lie at residues 812-835, 919-939, and 951-1352; these read LASL…FSTR, SSSY…AVGR, and DESD…QKPQ. Over residues 958–970 the composition is skewed to polar residues; sequence LNSSVVDTQSKHS. Low complexity-rich tracts occupy residues 992 to 1001, 1051 to 1070, 1078 to 1089, and 1101 to 1138; these read VDQSDSVDSS, SSLS…SLKP, DSSSRGSGRHSS, and PKSQ…GPAT. Residues 1148–1159 show a composition bias toward basic and acidic residues; it reads RTSDHSLSREGS. The segment covering 1160–1181 has biased composition (polar residues); sequence RQSLGSDRASATSTSKPNSPRV. Over residues 1198–1210 the composition is skewed to low complexity; that stretch reads SSSMASLRSPSTS. Basic and acidic residues-rich tracts occupy residues 1215–1225 and 1234–1243; these read LKRDSKSEDKG and RQKETRRSTD. Residues 1251–1264 show a composition bias toward low complexity; that stretch reads SKKAGGSSVKSVCK. The residue at position 1264 (Lys1264) is an N6-acetyllysine. 2 stretches are compositionally biased toward polar residues: residues 1278–1290 and 1341–1352; these read PASQ…TTGK and MQTSARPSQKPQ.

The protein belongs to the peptidase C19 family. In terms of processing, acetylated at Lys-1264. Acetylation decreases activity. Deacetylated by SIRT1. As to expression, widely expressed.

It carries out the reaction Thiol-dependent hydrolysis of ester, thioester, amide, peptide and isopeptide bonds formed by the C-terminal Gly of ubiquitin (a 76-residue protein attached to proteins as an intracellular targeting signal).. In terms of biological role, deubiquitinase that recognizes and hydrolyzes the peptide bond at the C-terminal Gly of ubiquitin. May play a role in the regulation of NF-kappa-B signaling pathway by deubiquitinating TRAF2. Its function is as follows. (Microbial infection) Plays a positive role in foot-and-mouth disease and classical swine fever viral infection. Mechanistically, associates with internal ribosomal entry site (IRES) element within the 5'-untranslated region of viral genomes to promote translation of the virus-encoded polyprotein. The sequence is that of Ubiquitin carboxyl-terminal hydrolase 31 (USP31) from Homo sapiens (Human).